We begin with the raw amino-acid sequence, 935 residues long: Progesterone receptor (935 aa).

Positions 1-164 (MTELKAKGPR…PATQRVLSPL (164 aa)) are AF3; mediates transcriptional activation. Residues 1–256 (MTELKAKGPR…AAAGGGAAAV (256 aa)) form a disordered region. Residues 1–568 (MTELKAKGPR…YSFESLPQKI (568 aa)) are modulating, Pro-Rich. The residue at position 20 (Ser-20) is a Phosphoserine. The LXXL motif 1 signature appears at 55–59 (LDGLL). Ser-81 is modified (phosphoserine). Positions 115–119 (LDTLL) match the LXXL motif 2 motif. A phosphoserine mark is found at Ser-130 and Ser-162. The interval 165–305 (MSRSGGKAGD…LATTTMDFTH (141 aa)) is mediates transcriptional transrepression. The short motif at 183-187 (KVLPR) is the Nuclear localization signal element. Phosphoserine occurs at positions 190 and 213. Acidic residues predominate over residues 220–231 (EVEEEDGSESED). A compositionally biased stretch (low complexity) spans 232–246 (SAGPLLKGKPRALGG). Phosphoserine; by MAPK1 is present on Ser-294. The tract at residues 328-353 (SYDGGAGAASAFAPPRSSPSASSTPV) is disordered. The span at 335-350 (AASAFAPPRSSPSASS) shows a compositional bias: low complexity. Ser-345 carries the phosphoserine; by MAPK modification. Lys-388 is covalently cross-linked (Glycyl lysine isopeptide (Lys-Gly) (interchain with G-Cter in SUMO); alternate). Lys-388 participates in a covalent cross-link: Glycyl lysine isopeptide (Lys-Gly) (interchain with G-Cter in ubiquitin); alternate. Ser-400 carries the post-translational modification Phosphoserine; by CDK2. The disordered stretch occupies residues 415–452 (PDFPLGPPPPLPPRAPPSRPGEAAVTAAPAGASVSSAS). The segment covering 418-433 (PLGPPPPLPPRAPPSR) has biased composition (pro residues). The span at 434 to 452 (PGEAAVTAAPAGASVSSAS) shows a compositional bias: low complexity. Positions 456-548 (STLECILYKA…VYPPYLNYLR (93 aa)) are AF1; mediates transcriptional activation. Lys-533 participates in a covalent cross-link: Glycyl lysine isopeptide (Lys-Gly) (interchain with G-Cter in SUMO). 2 consecutive NR C4-type zinc fingers follow at residues 569-589 (CLIC…CGSC) and 605-629 (CAGR…LRKC). The nuclear receptor DNA-binding region spans 569-641 (CLICGDEASG…AGMVLGGRKF (73 aa)). A Phosphoserine modification is found at Ser-678. Residues 681-915 (QDIQLIPPLI…EFPEMMSEVI (235 aa)) enclose the NR LBD domain. Residues 689 to 935 (LINLLVSIEP…MVKPLLFHKK (247 aa)) form an AF2; mediates transcriptional activation region. Arg-768 provides a ligand contact to progesterone.

Belongs to the nuclear hormone receptor family. In terms of assembly, interacts with SMARD1 and UNC45A. Interacts with CUEDC2; the interaction promotes ubiquitination, decreases sumoylation, and represses transcriptional activity. Interacts with PIAS3; the interaction promotes sumoylation of PR in a hormone-dependent manner, inhibits DNA-binding, and alters nuclear export. Interacts with SP1; the interaction requires ligand-induced phosphorylation on Ser-345 by ERK1/2-MAPK. Interacts with PRMT2. Interacts with NCOA2 and NCOA1. Interacts with KLF9. Interacts with GTF2B. In terms of processing, phosphorylated on multiple serine sites. Several of these sites are hormone-dependent. Phosphorylation on Ser-294 is highly hormone-dependent and modulates ubiquitination and sumoylation on Lys-388. Phosphorylation on Ser-345 also requires induction by hormone. Basal phosphorylation on Ser-81, Ser-162, Ser-190 and Ser-400 is increased in response to progesterone and can be phosphorylated in vitro by the CDK2-A1 complex. Increased levels of phosphorylation on Ser-400 also in the presence of EGF, heregulin, IGF, PMA and FBS. Phosphorylation at this site by CDK2 is ligand-independent, and increases nuclear translocation and transcriptional activity. Phosphorylation at Ser-162 and Ser-294, but not at Ser-190, is impaired during the G(2)/M phase of the cell cycle. Phosphorylation on Ser-345 by ERK1/2 MAPK is required for interaction with SP1. Sumoylation is hormone-dependent and represses transcriptional activity. Sumoylation on all three sites is enhanced by PIAS3. Desumoylated by SENP1. Sumoylation on Lys-388, the main site of sumoylation, is repressed by ubiquitination on the same site, and modulated by phosphorylation at Ser-294. Post-translationally, ubiquitination is hormone-dependent and represses sumoylation on the same site. Promoted by MAPK-mediated phosphorylation on Ser-294. Ubiquitinated by UBR5, leading to its degradation: UBR5 specifically recognizes and binds ligand-bound PGR when it is not associated with coactivators (NCOAs). In presence of NCOAs, the UBR5-degron is not accessible, preventing its ubiquitination and degradation. In terms of processing, palmitoylated by ZDHHC7 and ZDHHC21. Palmitoylation is required for plasma membrane targeting and for rapid intracellular signaling via ERK and AKT kinases and cAMP generation.

It is found in the nucleus. The protein resides in the cytoplasm. Its function is as follows. The steroid hormones and their receptors are involved in the regulation of eukaryotic gene expression and affect cellular proliferation and differentiation in target tissues. Transcriptional activator of several progesteron-dependent promoters in a variety of cell types. Involved in activation of SRC-dependent MAPK signaling on hormone stimulation. This chain is Progesterone receptor (PGR), found in Macaca sylvanus (Barbary macaque).